A 205-amino-acid chain; its full sequence is Guanylate kinase (205 aa).

A Guanylate kinase-like domain is found at 5-184 (GLLIVLSGPS…AVQKIKGIVE (180 aa)). 12–19 (GPSGVGKG) is a binding site for ATP.

Belongs to the guanylate kinase family.

The protein resides in the cytoplasm. It carries out the reaction GMP + ATP = GDP + ADP. In terms of biological role, essential for recycling GMP and indirectly, cGMP. This is Guanylate kinase from Listeria monocytogenes serotype 4b (strain F2365).